The primary structure comprises 217 residues: Somatotropin (217 aa).

The first 26 residues, 1-26, serve as a signal peptide directing secretion; the sequence is MATGSHTTTLLLAVALLGLPWPQEAG. Residue His46 participates in Zn(2+) binding. A disulfide bridge links Cys79 with Cys190. Residue Glu199 participates in Zn(2+) binding. A disulfide bond links Cys207 and Cys215.

The protein belongs to the somatotropin/prolactin family.

It is found in the secreted. Functionally, plays an important role in growth control. Its major role in stimulating body growth is to stimulate the liver and other tissues to secrete IGF1. It stimulates both the differentiation and proliferation of myoblasts. It also stimulates amino acid uptake and protein synthesis in muscle and other tissues. In Galago senegalensis (Northern lesser bushbaby), this protein is Somatotropin (GH1).